Here is a 258-residue protein sequence, read N- to C-terminus: L-aspartate dehydrogenase 1 (258 aa).

The NAD(+) site is built by Ala121 and Asn181. Residue His211 is part of the active site.

It belongs to the L-aspartate dehydrogenase family.

The catalysed reaction is L-aspartate + NADP(+) + H2O = oxaloacetate + NH4(+) + NADPH + H(+). It carries out the reaction L-aspartate + NAD(+) + H2O = oxaloacetate + NH4(+) + NADH + H(+). It functions in the pathway cofactor biosynthesis; NAD(+) biosynthesis; iminoaspartate from L-aspartate (dehydrogenase route): step 1/1. In terms of biological role, specifically catalyzes the NAD or NADP-dependent dehydrogenation of L-aspartate to iminoaspartate. This chain is L-aspartate dehydrogenase 1, found in Bordetella pertussis (strain Tohama I / ATCC BAA-589 / NCTC 13251).